The sequence spans 391 residues: Saxitoxin and tetrodotoxin-binding protein 1 (391 aa).

The signal sequence occupies residues 1 to 20; it reads MGAVPGVVLLLMLAVLGIRA. 2 repeat units span residues 24-202 and 203-391. 7 N-linked (GlcNAc...) asparagine glycosylation sites follow: Asn54, Asn63, Asn97, Asn234, Asn268, Asn277, and Asn307.

As to quaternary structure, homodimer or heterodimer of PSTBP1 and PSTBP2. Post-translationally, glycosylated.

The protein resides in the secreted. Functionally, binds both saxitoxin and tetradotoxin. May play a role in toxin accumulation and/or excretion. This chain is Saxitoxin and tetrodotoxin-binding protein 1 (psbp1), found in Takifugu pardalis (Panther puffer).